We begin with the raw amino-acid sequence, 82 residues long: Musculoskeletal embryonic nuclear protein 1 (82 aa).

The disordered stretch occupies residues 1–34 (MSQAGAQEAPIKKKRPPVKEEDLKGARGNLTKNQ). Phosphoserine is present on Ser2. A Nuclear localization signal motif is present at residues 10-18 (PIKKKRPPV).

It belongs to the MUSTN1 family.

The protein localises to the nucleus. Its subcellular location is the cytoplasm. The protein resides in the secreted. It is found in the extracellular space. In terms of biological role, required for chondrocyte development and proliferation. Plays a role in myoblast differentiation and fusion. Modulates skeletal muscle extracellular matrix composition. Plays a role in skeletal muscle function. Plays a role in glucose homeostasis. This Bos taurus (Bovine) protein is Musculoskeletal embryonic nuclear protein 1 (MUSTN1).